Here is a 255-residue protein sequence, read N- to C-terminus: Diphthine synthase (255 aa).

S-adenosyl-L-methionine is bound by residues leucine 9, aspartate 85, valine 88, 113–114 (SI), leucine 164, alanine 207, and histidine 232.

This sequence belongs to the diphthine synthase family. In terms of assembly, homodimer.

It carries out the reaction 2-[(3S)-amino-3-carboxypropyl]-L-histidyl-[translation elongation factor 2] + 3 S-adenosyl-L-methionine = diphthine-[translation elongation factor 2] + 3 S-adenosyl-L-homocysteine + 3 H(+). It participates in protein modification; peptidyl-diphthamide biosynthesis. S-adenosyl-L-methionine-dependent methyltransferase that catalyzes the trimethylation of the amino group of the modified target histidine residue in translation elongation factor 2 (EF-2), to form an intermediate called diphthine. The three successive methylation reactions represent the second step of diphthamide biosynthesis. This Methanococcus maripaludis (strain C5 / ATCC BAA-1333) protein is Diphthine synthase.